Here is a 596-residue protein sequence, read N- to C-terminus: Probable tripeptidyl-peptidase SED2 (596 aa).

The signal sequence occupies residues 1-16 (MRLLKFVCLLASVAAA). Positions 17 to 203 (KPTPGASHKV…LESMSVEEFA (187 aa)) are cleaved as a propeptide — removed in mature form. In terms of domain architecture, Peptidase S53 spans 210–596 (LVTTACLREL…NFQALTKVLP (387 aa)). Residue Asn-265 is glycosylated (N-linked (GlcNAc...) asparagine). Residues Glu-286 and Asp-290 each act as charge relay system in the active site. Residue Asn-403 is glycosylated (N-linked (GlcNAc...) asparagine). The active-site Charge relay system is Ser-501. Ca(2+) is bound by residues Asp-543 and Ile-544. A glycan (N-linked (GlcNAc...) asparagine) is linked at Asn-572. Gly-576 and Asp-578 together coordinate Ca(2+).

Ca(2+) serves as cofactor.

The protein localises to the secreted. Its subcellular location is the extracellular space. The catalysed reaction is Release of an N-terminal tripeptide from a polypeptide.. In terms of biological role, secreted tripeptidyl-peptidase which degrades proteins at acidic pHs and is involved in virulence. The polypeptide is Probable tripeptidyl-peptidase SED2 (SED2) (Trichophyton verrucosum (strain HKI 0517)).